The sequence spans 95 residues: Pyrimidine/purine nucleoside phosphorylase (95 aa).

This sequence belongs to the nucleoside phosphorylase PpnP family.

The catalysed reaction is a purine D-ribonucleoside + phosphate = a purine nucleobase + alpha-D-ribose 1-phosphate. It catalyses the reaction adenosine + phosphate = alpha-D-ribose 1-phosphate + adenine. It carries out the reaction cytidine + phosphate = cytosine + alpha-D-ribose 1-phosphate. The enzyme catalyses guanosine + phosphate = alpha-D-ribose 1-phosphate + guanine. The catalysed reaction is inosine + phosphate = alpha-D-ribose 1-phosphate + hypoxanthine. It catalyses the reaction thymidine + phosphate = 2-deoxy-alpha-D-ribose 1-phosphate + thymine. It carries out the reaction uridine + phosphate = alpha-D-ribose 1-phosphate + uracil. The enzyme catalyses xanthosine + phosphate = alpha-D-ribose 1-phosphate + xanthine. Functionally, catalyzes the phosphorolysis of diverse nucleosides, yielding D-ribose 1-phosphate and the respective free bases. Can use uridine, adenosine, guanosine, cytidine, thymidine, inosine and xanthosine as substrates. Also catalyzes the reverse reactions. The sequence is that of Pyrimidine/purine nucleoside phosphorylase from Vibrio cholerae serotype O1 (strain ATCC 39315 / El Tor Inaba N16961).